Here is a 362-residue protein sequence, read N- to C-terminus: Putative protein ARB2BP (362 aa).

A helical membrane pass occupies residues 229–245 (IAFIVHGYGGLVFMDLL).

The protein belongs to the ARB2 family.

It localises to the membrane. The polypeptide is Putative protein ARB2BP (Homo sapiens (Human)).